Consider the following 930-residue polypeptide: Translation initiation factor IF-2 (930 aa).

The tract at residues 27–342 (LGLDVKSHSS…APKPVTERKF (316 aa)) is disordered. Positions 52–103 (KAAAPQAPAEKPVAAQPSPQKTPAKEAAPVKAEPTEAKAAAQPEAKTETAAP) are enriched in low complexity. Basic and acidic residues-rich tracts occupy residues 112–128 (FKAE…ERRK) and 136–178 (QNKE…DGRR). Over residues 183-195 (HQGFNGQKRQQPQ) the composition is skewed to polar residues. Basic and acidic residues predominate over residues 218–245 (RSSEERFKQAQEAKEVMERQNRRKEQPK). Pro residues predominate over residues 251-268 (PVQPAPAPSAPAANPSPA). The span at 280–297 (ARPDKKRDDFDREEEGPR) shows a compositional bias: basic and acidic residues. The segment covering 302-318 (NRSSQNQVRNQRNSNWN) has biased composition (low complexity). A tr-type G domain is found at 432–599 (ERPPVVTIMG…TVLLVAEIQE (168 aa)). The tract at residues 441–448 (GHVDHGKT) is G1. 441-448 (GHVDHGKT) contributes to the GTP binding site. Residues 466–470 (GITQH) form a G2 region. The tract at residues 487-490 (DTPG) is G3. GTP-binding positions include 487–491 (DTPGH) and 541–544 (NKID). Positions 541 to 544 (NKID) are G4. Residues 577-579 (SAK) form a G5 region.

The protein belongs to the TRAFAC class translation factor GTPase superfamily. Classic translation factor GTPase family. IF-2 subfamily.

It is found in the cytoplasm. Functionally, one of the essential components for the initiation of protein synthesis. Protects formylmethionyl-tRNA from spontaneous hydrolysis and promotes its binding to the 30S ribosomal subunits. Also involved in the hydrolysis of GTP during the formation of the 70S ribosomal complex. The protein is Translation initiation factor IF-2 of Streptococcus sanguinis (strain SK36).